Consider the following 56-residue polypeptide: Small ribosomal subunit protein uS14 (56 aa).

It belongs to the universal ribosomal protein uS14 family. As to quaternary structure, component of the small ribosomal subunit (SSU). Mature yeast ribosomes consist of a small (40S) and a large (60S) subunit. The 40S small subunit contains 1 molecule of ribosomal RNA (18S rRNA) and at least 33 different proteins. The large 60S subunit contains 3 rRNA molecules (25S, 5.8S and 5S rRNA) and at least 46 different proteins.

It is found in the cytoplasm. It localises to the nucleus. Its function is as follows. Component of the ribosome, a large ribonucleoprotein complex responsible for the synthesis of proteins in the cell. The small ribosomal subunit (SSU) binds messenger RNAs (mRNAs) and translates the encoded message by selecting cognate aminoacyl-transfer RNA (tRNA) molecules. The large subunit (LSU) contains the ribosomal catalytic site termed the peptidyl transferase center (PTC), which catalyzes the formation of peptide bonds, thereby polymerizing the amino acids delivered by tRNAs into a polypeptide chain. The nascent polypeptides leave the ribosome through a tunnel in the LSU and interact with protein factors that function in enzymatic processing, targeting, and the membrane insertion of nascent chains at the exit of the ribosomal tunnel. This chain is Small ribosomal subunit protein uS14 (rps29), found in Schizosaccharomyces pombe (strain 972 / ATCC 24843) (Fission yeast).